The chain runs to 140 residues: Sec-independent protein translocase protein TatB (140 aa).

A helical membrane pass occupies residues 2-22 (LPGIGFSELLLIGLAALIIIG). The disordered stretch occupies residues 90 to 140 (VNSAVMREHPVSPPPPATPPAPPAELPPEAAPHADSQNAPPEADPAKGDRT). The span at 100–119 (VSPPPPATPPAPPAELPPEA) shows a compositional bias: pro residues.

It belongs to the TatB family. As to quaternary structure, the Tat system comprises two distinct complexes: a TatABC complex, containing multiple copies of TatA, TatB and TatC subunits, and a separate TatA complex, containing only TatA subunits. Substrates initially bind to the TatABC complex, which probably triggers association of the separate TatA complex to form the active translocon.

Its subcellular location is the cell inner membrane. Part of the twin-arginine translocation (Tat) system that transports large folded proteins containing a characteristic twin-arginine motif in their signal peptide across membranes. Together with TatC, TatB is part of a receptor directly interacting with Tat signal peptides. TatB may form an oligomeric binding site that transiently accommodates folded Tat precursor proteins before their translocation. This Hyphomonas neptunium (strain ATCC 15444) protein is Sec-independent protein translocase protein TatB.